The following is a 214-amino-acid chain: Ribonuclease HII (214 aa).

An RNase H type-2 domain is found at 26-214 (EIVCGVDEAG…PVREAFDLIR (189 aa)). A divalent metal cation contacts are provided by Asp32, Glu33, and Asp124.

It belongs to the RNase HII family. It depends on Mn(2+) as a cofactor. Mg(2+) is required as a cofactor.

The protein localises to the cytoplasm. The enzyme catalyses Endonucleolytic cleavage to 5'-phosphomonoester.. In terms of biological role, endonuclease that specifically degrades the RNA of RNA-DNA hybrids. This chain is Ribonuclease HII, found in Burkholderia pseudomallei (strain 668).